A 78-amino-acid chain; its full sequence is Translational regulator CsrA (78 aa).

The protein belongs to the CsrA/RsmA family. As to quaternary structure, homodimer; the beta-strands of each monomer intercalate to form a hydrophobic core, while the alpha-helices form wings that extend away from the core.

The protein localises to the cytoplasm. Its function is as follows. A translational regulator that binds mRNA to regulate translation initiation and/or mRNA stability. Usually binds in the 5'-UTR at or near the Shine-Dalgarno sequence preventing ribosome-binding, thus repressing translation. Its main target seems to be the major flagellin gene, while its function is anatagonized by FliW. The polypeptide is Translational regulator CsrA (Borrelia recurrentis (strain A1)).